A 358-amino-acid polypeptide reads, in one-letter code: Uroporphyrinogen decarboxylase (358 aa).

Substrate contacts are provided by residues 28–32 (RQAGR), Asp78, Tyr154, Ser208, and His324.

Belongs to the uroporphyrinogen decarboxylase family. As to quaternary structure, homodimer.

Its subcellular location is the cytoplasm. It carries out the reaction uroporphyrinogen III + 4 H(+) = coproporphyrinogen III + 4 CO2. It functions in the pathway porphyrin-containing compound metabolism; protoporphyrin-IX biosynthesis; coproporphyrinogen-III from 5-aminolevulinate: step 4/4. Catalyzes the decarboxylation of four acetate groups of uroporphyrinogen-III to yield coproporphyrinogen-III. The sequence is that of Uroporphyrinogen decarboxylase from Acidiphilium cryptum (strain JF-5).